Here is a 244-residue protein sequence, read N- to C-terminus: Pyridoxal phosphate homeostasis protein (244 aa).

The residue at position 37 (K37) is an N6-(pyridoxal phosphate)lysine.

It belongs to the pyridoxal phosphate-binding protein YggS/PROSC family.

Pyridoxal 5'-phosphate (PLP)-binding protein, which may be involved in intracellular homeostatic regulation of pyridoxal 5'-phosphate (PLP), the active form of vitamin B6. The sequence is that of Pyridoxal phosphate homeostasis protein from Caenorhabditis elegans.